The chain runs to 646 residues: Macrolide export ATP-binding/permease protein MacB (646 aa).

The ABC transporter domain maps to 7 to 245; it reads IRLEDICKTF…EATLQPHEEI (239 aa). Position 43-50 (43-50) interacts with ATP; sequence GASGSGKS. Transmembrane regions (helical) follow at residues 274-294, 528-548, 572-592, and 609-629; these read VLTL…LAIG, VAAI…LVSV, FIIE…ILGL, and FGPV…FGFL.

Belongs to the ABC transporter superfamily. Macrolide exporter (TC 3.A.1.122) family. As to quaternary structure, homodimer.

Its subcellular location is the cell inner membrane. Non-canonical ABC transporter that contains transmembrane domains (TMD), which form a pore in the inner membrane, and an ATP-binding domain (NBD), which is responsible for energy generation. Confers resistance against macrolides. This is Macrolide export ATP-binding/permease protein MacB from Brucella abortus (strain 2308).